The following is a 661-amino-acid chain: UvrABC system protein B (661 aa).

In terms of domain architecture, Helicase ATP-binding spans 25–182 (AGLSSKKRSQ…NDLINLQYER (158 aa)). 38 to 45 (GITGSGKT) provides a ligand contact to ATP. A Beta-hairpin motif is present at residues 91–114 (YYDYYQPEAYIARTDTFIEKDSSI). Residues 430–592 (QVEDLISEIQ…IIPKTINRAI (163 aa)) enclose the Helicase C-terminal domain. Positions 621 to 656 (KTHIDKLKKEMLKAASNLEFEQAVKLRDQLKTLEAA) constitute a UVR domain.

This sequence belongs to the UvrB family. Forms a heterotetramer with UvrA during the search for lesions. Interacts with UvrC in an incision complex.

It localises to the cytoplasm. In terms of biological role, the UvrABC repair system catalyzes the recognition and processing of DNA lesions. A damage recognition complex composed of 2 UvrA and 2 UvrB subunits scans DNA for abnormalities. Upon binding of the UvrA(2)B(2) complex to a putative damaged site, the DNA wraps around one UvrB monomer. DNA wrap is dependent on ATP binding by UvrB and probably causes local melting of the DNA helix, facilitating insertion of UvrB beta-hairpin between the DNA strands. Then UvrB probes one DNA strand for the presence of a lesion. If a lesion is found the UvrA subunits dissociate and the UvrB-DNA preincision complex is formed. This complex is subsequently bound by UvrC and the second UvrB is released. If no lesion is found, the DNA wraps around the other UvrB subunit that will check the other stand for damage. In Rickettsia peacockii (strain Rustic), this protein is UvrABC system protein B.